A 329-amino-acid chain; its full sequence is Segregation and condensation protein B (329 aa).

Disordered stretches follow at residues 1 to 39, 252 to 274, and 286 to 329; these read MTTGSNGPQDETPEPGTPGGPGPFSEEEIAAVTGPGPAD, IVEKEDKPAPPAAGTVEALSDPA, and SEAA…PKPE.

Belongs to the ScpB family. As to quaternary structure, homodimer. Homodimerization may be required to stabilize the binding of ScpA to the Smc head domains. Component of the Structural Maintenance of Chromosome (SMC) condensin-like complex composed of ScpA, ScpB and the Smc homodimer. ScpA and ScpB bind to the head domain of Smc, the presence of the three proteins is required for the association of the complex with DNA.

The protein resides in the cytoplasm. Its function is as follows. A conditionally essential component of the chromosome segregation machinery. Required for chromosome condensation and partitioning. Important for positioning and anchoring of ParB-parS complexes (ori of replication) in the subpolar region, and of the ter replication site, as well as for segration of the ParB-parS complex and thus chromosome segregation. Probably acts via the formation of a condensin-like complex containing Smc, ScpA and ScpB that pulls DNA away from mid-cell into both cell halves. This chain is Segregation and condensation protein B, found in Myxococcus xanthus (strain DK1622).